Here is a 151-residue protein sequence, read N- to C-terminus: HTH-type transcriptional regulator TcaR (151 aa).

The HTH marR-type domain maps to 1–142; it reads MVKHLQDHIQ…VRQVLEVINH (142 aa). A DNA-binding region (H-T-H motif) is located at residues 54–77; it reads ISEITQRQGVNKAAVSRRIKKLID.

Its function is as follows. Involved in the antibiotic teicoplanin susceptibility. Inactivation of the tcaRAB operon leads to teicoplanin resistance. In terms of biological role, is a weak negative regulator of transcription of the icaABD operon. This Staphylococcus aureus (strain COL) protein is HTH-type transcriptional regulator TcaR (tcaR).